The primary structure comprises 363 residues: MASYPKKKCGVLGATGSVGQRFILLLADHPFLELHAIGASNRSAGKKYKDAVRWKQTTAMSERLSNLVLRDCRADQFSDCDLVFSGLNSDVAGEIEMEFIKAEIPVFSNAKNYRKHPLVPLVVPTVNPQHLDLIPHQRKEFGLKKGFLVCNSNCAVIGVVIPFAALQAKFGPVEEVEVFTEQAVSGAGYPGVPSMDIMDNVIPYISGEEDKLENEAQKILGSLNADATAFDEQKGLTVGATCTRVGVTDGHMAFVSLRFKNRPGPSAEEVKQAMREYQSEAQKLGCPSAPREAIKVFDEPDRPQPRLDRDISKGYTVSVGRVREAAPGSYFDLRFAALSHNTVIGAAGSSILNAEVAVIKGYI.

The NADP(+) site is built by T15, G16, S17, V18, S40, S43, and L87. C154 serves as the catalytic Acyl-thioester intermediate. NADP(+) is bound at residue G186. The Proton acceptor role is filled by H251. N341 contacts NADP(+).

It belongs to the aspartate-semialdehyde dehydrogenase family. Homotetramer; dimer of dimers.

The protein resides in the cytoplasm. The protein localises to the cytosol. Its subcellular location is the nucleus. The enzyme catalyses L-aspartate 4-semialdehyde + phosphate + NADP(+) = 4-phospho-L-aspartate + NADPH + H(+). It participates in amino-acid biosynthesis; L-methionine biosynthesis via de novo pathway; L-homoserine from L-aspartate: step 2/3. Its pathway is amino-acid biosynthesis; L-threonine biosynthesis; L-threonine from L-aspartate: step 2/5. Its activity is regulated as follows. Inhibited by 4-amino-3-hydroxynaphthalene-1-sulfonic acid and the competitive inhibitor 1,4-benzoquinone and derivates such as 2-chloro-3-methoxy-1,4-naphthoquinone, 2,3-dichloro-1,4-naphthoquinone, 2-chloro-1,4-naphthoquinone, 2-bromo-1,4-naphthoquinone and 2,3-dichloro-5,8-dihydroxy-1,4-naphthoquinone. Catalyzes the NADPH-dependent formation of L-aspartate 4-semialdehyde (L-ASA) by the reductive dephosphorylation of 4-phospho-L-aspartate. Mediates the second step in the biosynthesis of amino acids that derive from aspartate (the aspartate family of amino acids), including methioinine and threonine, the latter of which is a precursor to isoleucine. The protein is Aspartate-semialdehyde dehydrogenase of Aspergillus fumigatus (strain ATCC MYA-4609 / CBS 101355 / FGSC A1100 / Af293) (Neosartorya fumigata).